A 291-amino-acid polypeptide reads, in one-letter code: Endo-1,4-beta-xylanase 11B (291 aa).

An N-terminal signal peptide occupies residues 1–19; that stretch reads MVAFSSLFLGASIAATALA. Residues 34–222 form the GH11 domain; that stretch reads TYTQSATGTH…SSGSARINVG (189 aa). Residue asparagine 93 is glycosylated (N-linked (GlcNAc...) asparagine). Glutamate 118 acts as the Nucleophile in catalysis. Glutamate 209 (proton donor) is an active-site residue. The segment at 223–246 is disordered; it reads GGSTGGGNNGGGNNGGNPGGNPGG. In terms of domain architecture, CBM1 spans 255–291; it reads NCSPRWGQCGGQGWNGPTCCESGTTCRQQNQWYSQCL.

This sequence belongs to the glycosyl hydrolase 11 (cellulase G) family.

The protein localises to the secreted. It catalyses the reaction Endohydrolysis of (1-&gt;4)-beta-D-xylosidic linkages in xylans.. It functions in the pathway glycan degradation; xylan degradation. With respect to regulation, the activity iss completely inhibited by Hg(2+), a metal ion that interacts with Trp and oxidizes the indole ring, and is significantly enhanced by beta-mercaptoethanol, which counteracts the oxidation effects of the S-S linkage between Cys residues. In terms of biological role, endo-1,4-beta-xylanase involved in the hydrolysis of xylan, a major structural heterogeneous polysaccharide found in plant biomass representing the second most abundant polysaccharide in the biosphere, after cellulose. Shows maximum activity on soluble wheat arabinoxylan (defined as 100%), moderate activity on birchwood xylan (80.5%) and beechwood xylan (76.2%), and weak activity on insoluble wheat arabinoxylan (7.0%). Has no activity towards glucan or carboxymethyl cellulose-sodium (CMC-Na). This is Endo-1,4-beta-xylanase 11B from Humicola insolens (Soft-rot fungus).